Reading from the N-terminus, the 106-residue chain is Large ribosomal subunit protein eL42 (106 aa).

The protein belongs to the eukaryotic ribosomal protein eL42 family.

The chain is Large ribosomal subunit protein eL42 (RPL44) from Yarrowia lipolytica (strain CLIB 122 / E 150) (Yeast).